The primary structure comprises 100 residues: Small ribosomal subunit protein uS14c (100 aa).

Belongs to the universal ribosomal protein uS14 family. As to quaternary structure, part of the 30S ribosomal subunit.

It is found in the plastid. It localises to the chloroplast. Binds 16S rRNA, required for the assembly of 30S particles. The protein is Small ribosomal subunit protein uS14c of Oedogonium cardiacum (Filamentous green alga).